The sequence spans 435 residues: Ribosomal protein uS12 methylthiotransferase RimO (435 aa).

The MTTase N-terminal domain occupies 3-113 (HKVGFVSLGC…VVNAVHQYLP (111 aa)). 6 residues coordinate [4Fe-4S] cluster: Cys-12, Cys-48, Cys-77, Cys-144, Cys-148, and Cys-151. The 238-residue stretch at 130-367 (LTPRHYAYLK…MQVQAEISRN (238 aa)) folds into the Radical SAM core domain. The 66-residue stretch at 370-435 (KNKIGSTQTV…DDYDLYASLV (66 aa)) folds into the TRAM domain.

The protein belongs to the methylthiotransferase family. RimO subfamily. [4Fe-4S] cluster serves as cofactor.

The protein resides in the cytoplasm. The enzyme catalyses L-aspartate(89)-[ribosomal protein uS12]-hydrogen + (sulfur carrier)-SH + AH2 + 2 S-adenosyl-L-methionine = 3-methylsulfanyl-L-aspartate(89)-[ribosomal protein uS12]-hydrogen + (sulfur carrier)-H + 5'-deoxyadenosine + L-methionine + A + S-adenosyl-L-homocysteine + 2 H(+). Its function is as follows. Catalyzes the methylthiolation of an aspartic acid residue of ribosomal protein uS12. This chain is Ribosomal protein uS12 methylthiotransferase RimO, found in Legionella pneumophila subsp. pneumophila (strain Philadelphia 1 / ATCC 33152 / DSM 7513).